The primary structure comprises 931 residues: Netrin receptor UNC5C (931 aa).

A signal peptide spans 1-40 (MRKGLRATAARCGLGLGYLLQMLVLPALALLSASGTGSAA). The Extracellular segment spans residues 41–380 (QDDDFFHELP…APDSDDVALY (340 aa)). In terms of domain architecture, Ig-like spans 62–159 (PHFLIEPEEA…AGTTKSRKAY (98 aa)). Disulfide bonds link Cys83–Cys144, Cys95–Cys142, Cys188–Cys239, Cys272–Cys309, Cys276–Cys313, Cys287–Cys299, Cys328–Cys362, Cys332–Cys367, and Cys340–Cys352. One can recognise an Ig-like C2-type domain in the interval 161-256 (RIAYLRKTFE…KRKSTTATVI (96 aa)). Asn236 carries an N-linked (GlcNAc...) asparagine glycan. TSP type-1 domains are found at residues 260-314 (NGGW…TLCP) and 316-368 (DGRW…GLCM). An N-linked (GlcNAc...) asparagine glycan is attached at Asn361. Residues 381-401 (VGIVIAVTVCLAITVVVALFV) form a helical membrane-spanning segment. The Cytoplasmic portion of the chain corresponds to 402-931 (YRKNHRDFES…VVSLAAEGQY (530 aa)). Residues 402–931 (YRKNHRDFES…VVSLAAEGQY (530 aa)) are required for netrin-mediated axon repulsion of neuronal growth cones. Ser502 carries the post-translational modification Phosphoserine. The ZU5 domain occupies 530-673 (CTAFGTFNSL…LSTYALVGQS (144 aa)). Phosphotyrosine is present on Tyr568. The segment at 694–712 (SLEYSIRVYCLDDTQDALK) is interaction with DCC. The Death domain occupies 850–929 (QKLCSSLDAP…ETVVSLAAEG (80 aa)).

This sequence belongs to the unc-5 family. Interacts with DCC (via cytoplasmic domain). Interacts (tyrosine phosphorylated form) with PTPN11. Interacts (via extracellular domain) with FLRT3 (via extracellular domain). Interacts (via Ig-like C2-type domain) with DSCAM (via extracellular domain). Interacts (via death domain) with DAPK1. Interacts (via cytoplasmic domain) with TUBB3; this interaction is decreased by NTN1/Netrin-1. Proteolytically cleaved by caspases during apoptosis. The cleavage does not take place when the receptor is associated with netrin ligand. Its cleavage by caspases is required to induce apoptosis. Post-translationally, phosphorylated on different cytoplasmic tyrosine residues. Phosphorylation of Tyr-568 leads to an interaction with PTPN11 phosphatase, suggesting that its activity is regulated by phosphorylation/dephosphorylation. Tyrosine phosphorylation is netrin-dependent. In terms of tissue distribution, detected in brain (at protein level). Mainly expressed in brain. Also expressed in kidney. Not expressed in developing or adult lung.

The protein localises to the cell membrane. It localises to the cell surface. It is found in the synapse. Its subcellular location is the synaptosome. The protein resides in the cell projection. The protein localises to the axon. It localises to the dendrite. It is found in the growth cone. Its subcellular location is the lamellipodium. The protein resides in the filopodium. Functionally, receptor for netrin required for axon guidance. Mediates axon repulsion of neuronal growth cones in the developing nervous system upon ligand binding. NTN1/Netrin-1 binding might cause dissociation of UNC5C from polymerized TUBB3 in microtubules and thereby lead to increased microtubule dynamics and axon repulsion. Axon repulsion in growth cones may also be caused by its association with DCC that may trigger signaling for repulsion. Might also collaborate with DSCAM in NTN1-mediated axon repulsion independently of DCC. Also involved in corticospinal tract axon guidance independently of DCC. Involved in dorsal root ganglion axon projection towards the spinal cord. It also acts as a dependence receptor required for apoptosis induction when not associated with netrin ligand. The protein is Netrin receptor UNC5C (Unc5c) of Rattus norvegicus (Rat).